A 426-amino-acid polypeptide reads, in one-letter code: 3-phosphoshikimate 1-carboxyvinyltransferase (426 aa).

3-phosphoshikimate-binding residues include Lys22, Ser23, and Arg27. Position 22 (Lys22) interacts with phosphoenolpyruvate. 2 residues coordinate phosphoenolpyruvate: Gly96 and Arg124. 3-phosphoshikimate contacts are provided by Ser170, Ser171, Gln172, Ser198, Asp314, Asn337, and Lys341. Gln172 is a binding site for phosphoenolpyruvate. Asp314 serves as the catalytic Proton acceptor. Phosphoenolpyruvate-binding residues include Arg345, Arg387, and Lys412.

It belongs to the EPSP synthase family. As to quaternary structure, monomer.

The protein resides in the cytoplasm. It carries out the reaction 3-phosphoshikimate + phosphoenolpyruvate = 5-O-(1-carboxyvinyl)-3-phosphoshikimate + phosphate. It functions in the pathway metabolic intermediate biosynthesis; chorismate biosynthesis; chorismate from D-erythrose 4-phosphate and phosphoenolpyruvate: step 6/7. Catalyzes the transfer of the enolpyruvyl moiety of phosphoenolpyruvate (PEP) to the 5-hydroxyl of shikimate-3-phosphate (S3P) to produce enolpyruvyl shikimate-3-phosphate and inorganic phosphate. The chain is 3-phosphoshikimate 1-carboxyvinyltransferase from Vibrio campbellii (strain ATCC BAA-1116).